We begin with the raw amino-acid sequence, 215 residues long: [PSI+] inducibility protein 3 (215 aa).

S2 bears the N-acetylserine mark. Phosphoserine occurs at positions 52 and 55. An SH3 domain is found at 54 to 113 (ASLEYVEALYQFDPQQDGDLGLKPGDKVQLLEKLSPEWYKGSCNGRTGIFPANYVKPAFS). A Glycyl lysine isopeptide (Lys-Gly) (interchain with G-Cter in ubiquitin) cross-link involves residue K80. The tract at residues 114–189 (GSNGPSNLPP…HQSSHSHLKS (76 aa)) is disordered. The PY motif signature appears at 124-127 (PPQY).

It belongs to the LSB1 family. Interacts with LAS17, RSP5 and SUP35. Ubiquitinated by RSP5. Ubiquitination reduces the protein abundance and its prion-inducing ability.

The protein resides in the cytoplasm. It localises to the nucleus. It is found in the cytoskeleton. The protein localises to the actin patch. In terms of biological role, overproduction promotes the de novo induction of the [PSI+] prion form of SUP35. The prion-inducing effect depends on the association with the actin cytoskeleton. Also implicated in prion maintenance during heat stress. The sequence is that of [PSI+] inducibility protein 3 (PIN3) from Saccharomyces cerevisiae (strain ATCC 204508 / S288c) (Baker's yeast).